The chain runs to 2280 residues: Protein Ycf2 (2280 aa).

1631–1638 (GSIGTGRS) provides a ligand contact to ATP.

It belongs to the Ycf2 family.

The protein localises to the plastid. The protein resides in the chloroplast stroma. Its function is as follows. Probable ATPase of unknown function. Its presence in a non-photosynthetic plant (Epifagus virginiana) and experiments in tobacco indicate that it has an essential function which is probably not related to photosynthesis. This Nicotiana tomentosiformis (Tobacco) protein is Protein Ycf2.